The chain runs to 60 residues: Large ribosomal subunit protein bL32 (60 aa).

Belongs to the bacterial ribosomal protein bL32 family.

The polypeptide is Large ribosomal subunit protein bL32 (Persephonella marina (strain DSM 14350 / EX-H1)).